Reading from the N-terminus, the 142-residue chain is MGAQSLPPAWQLYLKDHRVSTFKNWPFLEGCACTPERMAAAGFIHCPTENEPDLAQCFFCFKELEGWEPDDDPIEEHKKHSSGCAFLSVKKQFEELTLSEFLKLDKERTKNKIAKETNNKQKEFEETAKKVRCAIEQLAALE.

The stretch at 18–88 is one BIR repeat; it reads RVSTFKNWPF…KHSSGCAFLS (71 aa). A Phosphoserine; by AURKC modification is found at Ser20. Lys23 carries the post-translational modification N6-acetyllysine. Thr34 is subject to Phosphothreonine; by CDK1 and CDK15. Phosphothreonine is present on Thr48. Cys57, Cys60, His77, and Cys84 together coordinate Zn(2+). 4 positions are modified to N6-acetyllysine: Lys90, Lys110, Lys112, and Lys115. Thr117 is modified (phosphothreonine; by AURKB). Lys129 is subject to N6-acetyllysine.

The protein belongs to the IAP family. As to quaternary structure, monomer or homodimer. Exists as a homodimer in the apo state and as a monomer in the CPC-bound state. The monomer protects cells against apoptosis more efficiently than the dimer. Only the dimeric form is capable of enhancing tubulin stability in cells. When phosphorylated, interacts with LAMTOR5/HBXIP; the resulting complex binds pro-CASP9, as well as active CASP9, but much less efficiently. Component of the chromosomal passenger complex (CPC) composed of at least BIRC5/survivin, CDCA8/borealin, INCENP, AURKB or AURKC; in the complex forms a triple-helix bundle-based subcomplex with INCENP and CDCA8. Interacts with JTB. Interacts (via BIR domain) with histone H3 phosphorylated at 'Thr-3' (H3pT3). Interacts with EVI5. Interacts with GTP-bound RAN in both the S and M phases of the cell cycle. Interacts with USP9X. Interacts with tubulin. Interacts with BIRC2/c-IAP1. The acetylated form at Lys-129 interacts with STAT3. The monomeric form deacetylated at Lys-129 interacts with XPO1/CRM1. The monomeric form interacts with XIAP/BIRC4. Both the dimeric and monomeric form can interact with DIABLO/SMAC. Interacts with BIRC6/bruce. Interacts with FBXL7; this interaction facilitates the polyubiquitination and subsequent proteasomal degradation of BIRC5 by the SCF(FBXL7) E3 ubiquitin-protein ligase complex. Ubiquitinated by the Cul9-RING ubiquitin-protein ligase complex, leading to its degradation. Ubiquitination is required for centrosomal targeting. Deubiquitinated by USP35 or USP38; leading to stabilization. In terms of processing, acetylation at Lys-129 results in its homodimerization, while deacetylation promotes the formation of monomers which heterodimerize with XPO1/CRM1 which facilitates its nuclear export. The acetylated form represses STAT3 transactivation. The dynamic equilibrium between its acetylation and deacetylation at Lys-129 determines its interaction with XPO1/CRM1, its subsequent subcellular localization, and its ability to inhibit STAT3 transactivation. Post-translationally, in vitro phosphorylation at Thr-117 by AURKB prevents interaction with INCENP and localization to mitotic chromosomes. Phosphorylation at Thr-48 by CK2 is critical for its mitotic and anti-apoptotic activities. Phosphorylation at Thr-34 by CDK15 is critical for its anti-apoptotic activity. Phosphorylation at Ser-20 by AURKC is critical for regulation of proper chromosome alignment and segregation, and possibly cytokinesis.

It is found in the cytoplasm. The protein resides in the nucleus. The protein localises to the chromosome. It localises to the centromere. Its subcellular location is the cytoskeleton. It is found in the spindle. The protein resides in the kinetochore. The protein localises to the midbody. Functionally, multitasking protein that has dual roles in promoting cell proliferation and preventing apoptosis. Component of a chromosome passage protein complex (CPC) which is essential for chromosome alignment and segregation during mitosis and cytokinesis. Acts as an important regulator of the localization of this complex; directs CPC movement to different locations from the inner centromere during prometaphase to midbody during cytokinesis and participates in the organization of the center spindle by associating with polymerized microtubules. Involved in the recruitment of CPC to centromeres during early mitosis via association with histone H3 phosphorylated at 'Thr-3' (H3pT3) during mitosis. The complex with RAN plays a role in mitotic spindle formation by serving as a physical scaffold to help deliver the RAN effector molecule TPX2 to microtubules. May counteract a default induction of apoptosis in G2/M phase. The acetylated form represses STAT3 transactivation of target gene promoters. May play a role in neoplasia. Inhibitor of CASP3 and CASP7. Essential for the maintenance of mitochondrial integrity and function. In Bos taurus (Bovine), this protein is Baculoviral IAP repeat-containing protein 5 (BIRC5).